A 700-amino-acid polypeptide reads, in one-letter code: MYKTFSMELAGRTLTIETGKLAQLANGSVLVRYGDTVVLSTATASATPREGVDFFPLSVDYEERLYAVGKIPGGFIKREGKPSEKAILTARVIDRPLRPLFPKDLRNDVAIVNTVLSVDQDNSPELAALLGSSIAVSISDIPFNGPVGAVILGLIDGEVIINPTEKQKEISQMYVTLAGTRNKIVMIEAGANEVPDEVMLDAIKKGHEEIKKIVDFIDGIVKEVGKPKFEYESAEVPEEIFNAVREYAYDKMREAVLAVDKQVRDKNIDDLTKEITEHFAEVFPEMEPAIKEAIYKLEKKVVREYILEEGRRVDGRRLDEIRPLSAEVGLLPRVHGSGLFTRGQTQVLSSVTLGAMGDVQILDGIDTEETKRYMHHYNFPGFSVGEAKSSRGPGRREIGHGALAERALEPVIPSEEEFPYTIRVVSEVLMSNGSTSQGSVCGSTLALMDAGVPIKKPVAGISAGLVVDENNPDRFVTFMDIQGIEDFFGDMDFKVAGTKDGITAIQVDIKIDGLTEEIIKQAFELTRKGRLYIIDNVLLKAIPEPRKQMSKYAPKIISTTINPDKIREVIGPGGKMINKIIDETGVKIDINDDGRVYIFSSDIQAGKRARSMIEAIAKDIEPGQVFLGRVIRVTSFGAFVEFLPGKEGLVHISKLDKKRVERVEDIVRVGDQILVKVIEIDKQGRVNLSRKDAMEDEWDK.

Asp486 and Asp492 together coordinate Mg(2+). Residues 554 to 613 (PKIISTTINPDKIREVIGPGGKMINKIIDETGVKIDINDDGRVYIFSSDIQAGKRARSMI) enclose the KH domain. The region spanning 623–691 (GQVFLGRVIR…KQGRVNLSRK (69 aa)) is the S1 motif domain.

The protein belongs to the polyribonucleotide nucleotidyltransferase family. The cofactor is Mg(2+).

Its subcellular location is the cytoplasm. It catalyses the reaction RNA(n+1) + phosphate = RNA(n) + a ribonucleoside 5'-diphosphate. Involved in mRNA degradation. Catalyzes the phosphorolysis of single-stranded polyribonucleotides processively in the 3'- to 5'-direction. This chain is Polyribonucleotide nucleotidyltransferase, found in Acetivibrio thermocellus (strain ATCC 27405 / DSM 1237 / JCM 9322 / NBRC 103400 / NCIMB 10682 / NRRL B-4536 / VPI 7372) (Clostridium thermocellum).